The chain runs to 515 residues: Calcium-dependent protein kinase 2 (515 aa).

A disordered region spans residues 1-51 (MGNCCPGSGDAEPASSDASTGNGSSSFKAGASPSSAPAQNKPPAPIGPVLG). A lipid anchor (N-myristoyl glycine) is attached at Gly2. The span at 14 to 38 (ASSDASTGNGSSSFKAGASPSSAPA) shows a compositional bias: low complexity. A Protein kinase domain is found at 61–319 (YTIGKELGRG…AYEVLNHPWI (259 aa)). Residues 67 to 75 (LGRGQFGVT) and Lys90 contribute to the ATP site. Asp185 (proton acceptor) is an active-site residue. The segment at 325–355 (APDTPLDNAVMNRLKQFRAMNQFKKAALRVI) is autoinhibitory domain. EF-hand domains lie at 362-397 (EEIR…QGTK), 398-433 (LTEA…MNRM), 434-469 (DREE…KGLL), and 473-504 (DIKD…GNPE). Ca(2+) is bound by residues Asp375, Asp377, Ser379, Thr381, Glu386, Asp411, Asp413, Asn415, Thr417, Glu422, Asp447, Asp449, Ser451, Cys453, Glu458, Asp482, Asp484, Asp486, Arg488, and Glu493.

This sequence belongs to the protein kinase superfamily. Ser/Thr protein kinase family. CDPK subfamily. As to expression, expressed in heading panicles, spikelets and mature pollen grains.

It is found in the membrane. The enzyme catalyses L-seryl-[protein] + ATP = O-phospho-L-seryl-[protein] + ADP + H(+). It catalyses the reaction L-threonyl-[protein] + ATP = O-phospho-L-threonyl-[protein] + ADP + H(+). Its activity is regulated as follows. Activated by calcium. Autophosphorylation may play an important role in the regulation of the kinase activity. In terms of biological role, may play a role in signal transduction pathways that involve calcium as a second messenger. The sequence is that of Calcium-dependent protein kinase 2 from Oryza sativa subsp. japonica (Rice).